The following is a 171-amino-acid chain: Putative antiporter subunit mnhG2 (171 aa).

3 helical membrane-spanning segments follow: residues 11–31 (IAAL…IGIV), 51–71 (VLLT…FFSV), and 72–92 (RLLL…HLVA). A compositionally biased stretch (basic and acidic residues) spans 144-156 (DVQKQRQKEKQQE). The interval 144–171 (DVQKQRQKEKQQEENIESLSEARRETKD) is disordered.

Belongs to the CPA3 antiporters (TC 2.A.63) subunit G family. As to quaternary structure, may form a heterooligomeric complex that consists of seven subunits: mnhA2, mnhB2, mnhC2, mnhD2, mnhE2, mnhF2 and mnhG2.

The protein localises to the cell membrane. The polypeptide is Putative antiporter subunit mnhG2 (mnhG2) (Staphylococcus haemolyticus (strain JCSC1435)).